The chain runs to 157 residues: uncharacterized protein (157 aa).

Residues 36–63 (QIEELNELCQFFNISLTYTRESLEELEN) are a coiled coil.

This is an uncharacterized protein from Bacillus subtilis (strain 168).